We begin with the raw amino-acid sequence, 197 residues long: Protein shisa-4 (197 aa).

Positions 1-27 (MPPAGLRRAAPLTAIALLVLGAPLVLA) are cleaved as a signal peptide. At 28-87 (GEDCLWYLDRNGSWHPGFNCEFFTFCCGTCYHRYCCRDLTLLITERQQKHCLAFSPKTIA) the chain is on the extracellular side. The helical transmembrane segment at 88 to 108 (GIASAVILFVAVVATTICCFL) threads the bilayer. The Cytoplasmic segment spans residues 109 to 197 (CSCCYLYRRR…MPPQPSYPGA (89 aa)).

Belongs to the shisa family.

The protein localises to the membrane. The protein is Protein shisa-4 (SHISA4) of Homo sapiens (Human).